We begin with the raw amino-acid sequence, 620 residues long: Cilia- and flagella-associated protein 52 (620 aa).

12 WD repeats span residues 62–106, 109–150, 156–195, 203–242, 288–327, 330–369, 372–411, 415–454, 459–498, 500–539, 543–582, and 585–620; these read GHSN…LMAR, LHKG…AICG, LNVG…RKIW, QMKR…LADT, QLQG…ETLV, CHFE…ELLR, VPNM…LMYV, AHRI…QKLE, EHKS…RNQM, LANT…GIRE, SLSG…VTHV, and GHSG…PFPS.

This sequence belongs to the CFAP52 family. In terms of assembly, microtubule inner protein component of sperm flagellar doublet microtubules. Interacts with BRCA2. Interacts with the CCT chaperonin complex. Interacts with HSP70. Interacts with AK8. Interacts with CFAP45. Interacts with DNAI1. Interacts with IQDC. Expressed in respiratory cells and sperm (at protein level).

The protein resides in the cytoplasm. Its subcellular location is the cytoskeleton. It localises to the cilium axoneme. The protein localises to the flagellum axoneme. Its function is as follows. Microtubule inner protein (MIP) part of the dynein-decorated doublet microtubules (DMTs) in cilia axoneme. Important for proper ciliary and flagellar beating. May act in cooperation with CFAP45 and axonemal dynein subunit DNAH11. May play a role in cell growth and/or survival. This Sus scrofa (Pig) protein is Cilia- and flagella-associated protein 52 (CFAP52).